Reading from the N-terminus, the 339-residue chain is Silicatein (339 aa).

The N-terminal stretch at 1–18 is a signal peptide; the sequence is MAIVYGAILFQIILIACA. Residues 19–122 constitute a propeptide that is removed on maturation; that stretch reads EFPPEWHAWK…REYQAPATVS (104 aa). L123 carries the n,N-dimethylleucine; alternate modification. At L123 the chain carries N-methylleucine; alternate. Phosphoserine is present on S188. Y219 carries the phosphotyrosine modification. Active-site residues include H286 and N306. S335 carries the phosphoserine modification.

The protein belongs to the peptidase C1 family. In terms of assembly, homodimer. Homodimerization occurs as a result of non-covalent interactions and not through disulfide linkages between the two monomers.

Functionally, polymerizes silica around the axial filament during spicule formation. The sequence is that of Silicatein from Petrosia ficiformis (Common Mediterranean sponge).